The sequence spans 73 residues: ATP synthase subunit c (73 aa).

2 consecutive transmembrane segments (helical) span residues 4 to 24 and 51 to 71; these read LAIG…GIGI and GALA…IIIF.

The protein belongs to the ATPase C chain family. In terms of assembly, F-type ATPases have 2 components, F(1) - the catalytic core - and F(0) - the membrane proton channel. F(1) has five subunits: alpha(3), beta(3), gamma(1), delta(1), epsilon(1). F(0) has three main subunits: a(1), b(2) and c(10-14). The alpha and beta chains form an alternating ring which encloses part of the gamma chain. F(1) is attached to F(0) by a central stalk formed by the gamma and epsilon chains, while a peripheral stalk is formed by the delta and b chains.

Its subcellular location is the cell membrane. Functionally, f(1)F(0) ATP synthase produces ATP from ADP in the presence of a proton or sodium gradient. F-type ATPases consist of two structural domains, F(1) containing the extramembraneous catalytic core and F(0) containing the membrane proton channel, linked together by a central stalk and a peripheral stalk. During catalysis, ATP synthesis in the catalytic domain of F(1) is coupled via a rotary mechanism of the central stalk subunits to proton translocation. In terms of biological role, key component of the F(0) channel; it plays a direct role in translocation across the membrane. A homomeric c-ring of between 10-14 subunits forms the central stalk rotor element with the F(1) delta and epsilon subunits. The protein is ATP synthase subunit c of Caldanaerobacter subterraneus subsp. tengcongensis (strain DSM 15242 / JCM 11007 / NBRC 100824 / MB4) (Thermoanaerobacter tengcongensis).